A 1326-amino-acid chain; its full sequence is Paired amphipathic helix protein Sin3-like 4 (1326 aa).

PAH domains follow at residues 8-78 (QKLT…LPKG), 95-165 (KPVE…LPDT), and 292-367 (IPSS…LAQC). 4 disordered regions span residues 272 to 299 (DDDSAEMSDQAREGDKFSGAIPSSSTYD), 715 to 812 (VPSR…RAET), 844 to 864 (SVAGLSNSNPKPALTSGTEEL), and 927 to 1000 (SKSK…EGDM). Residues 721 to 737 (GAEDREDAVKSTNHDRE) are compositionally biased toward basic and acidic residues. Composition is skewed to polar residues over residues 744 to 757 (SPQNGASIANSMRS), 781 to 805 (SSKTSDALLSCDNTQNDKMPKNLTT), 844 to 861 (SVAGLSNSNPKPALTSGT), and 942 to 961 (PRSSDGSGNTSHNGDVSGTD). Residues 967-981 (DCYREDDIDHNKVES) are compositionally biased toward basic and acidic residues.

The protein resides in the nucleus. Its function is as follows. Acts as a transcriptional repressor. Plays roles in regulating gene expression and genome stability. This Arabidopsis thaliana (Mouse-ear cress) protein is Paired amphipathic helix protein Sin3-like 4 (SNL4).